A 206-amino-acid polypeptide reads, in one-letter code: RNA-binding protein (206 aa).

Positions Pro87–Arg206 are disordered. The span at Met109 to Ser132 shows a compositional bias: basic and acidic residues.

Belongs to the phytoreovirus RNA-binding protein family.

It localises to the host cytoplasm. Constituent of viral factories. Binds to ssRNA and dsRNA. The protein is RNA-binding protein of Rice gall dwarf virus (RGDV).